The primary structure comprises 858 residues: Neural cell adhesion molecule 1 (858 aa).

The first 19 residues, M1 to S19, serve as a signal peptide directing secretion. Ig-like C2-type domains are found at residues L20–N111, Q116–Q205, P212–H301, P308–Q413, and P416–E501. Residues L20 to G718 lie on the Extracellular side of the membrane. Cystine bridges form between C41-C96 and C139-C189. An N-linked (GlcNAc...) asparagine glycan is attached at N222. Cysteines 235 and 287 form a disulfide. N-linked (GlcNAc...) asparagine glycans are attached at residues N315, N347, N433, N459, and N488. An intrachain disulfide couples C329 to C395. A disulfide bridge connects residues C436 and C489. 2 consecutive Fibronectin type-III domains span residues T509–V608 and E611–P706. P706 is lipidated: GPI-anchor amidated asparagine. A helical transmembrane segment spans residues L719–V739. Residues D740–A858 lie on the Cytoplasmic side of the membrane. I741 is lipidated: GPI-anchor amidated asparagine. The tract at residues G766–A858 is disordered. Basic and acidic residues-rich tracts occupy residues K768–P809 and E817–T834. S780 and S784 each carry phosphoserine.

As to quaternary structure, (Microbial infection) Interacts with rabies virus glycoprotein. (Microbial infection) Interacts with Zika virus envelope protein E. In terms of assembly, interacts with MDK. Found in a complex with SLC39A6, SLC39A10 and with NCAM1; this complex controls NCAM1 phosphorylation and integration into focal adhesion complexes during epithelial-tomesenchymal transition. Interacts with synaptic plasticity regulator PANTS. Post-translationally, polysialylated at Asn-459 and Asn-488 by ST8SIA2 and ST8SIA4. Polysialylation modulates cell interactions by confering both attractive and repulsive properties that are highly regulated by ST8SIA2 and ST8SIA4. Polysialylation is formed on a-2,3-linked sialic acid of core glycans.

The protein localises to the cell membrane. Its subcellular location is the secreted. This protein is a cell adhesion molecule involved in neuron-neuron adhesion, neurite fasciculation, outgrowth of neurites, etc. Its function is as follows. (Microbial infection) Acts as a receptor for rabies virus. Functionally, (Microbial infection) Acts as a receptor for Zika virus. The polypeptide is Neural cell adhesion molecule 1 (Homo sapiens (Human)).